The sequence spans 396 residues: THAP domain-containing protein 5 (396 aa).

The segment at 2–85 (MPRYCAAICC…LKQTAVPTIF (84 aa)) adopts a THAP-type zinc-finger fold. Residues 86 to 113 (SLPEDNQGKDPSKKKSQKKNLEDEKEVC) form a disordered region. Residues 91–113 (NQGKDPSKKKSQKKNLEDEKEVC) show a composition bias toward basic and acidic residues. Residues 322–325 (EHSY) carry the HCFC1-binding motif (HBM) motif. A coiled-coil region spans residues 349–382 (LELKEQQTLGRLKSLEALVRQLKQENWLSEENVK).

Interacts with HTRA2; under apoptotic conditions. Interacts with ABRAXAS2. Post-translationally, cleaved by HTRA2 during apoptosis.

The protein resides in the nucleus. In terms of biological role, has sequence-specific DNA-binding activity and can function as transcriptional repressor (in vitro). May be a regulator of cell cycle: THAP5 overexpression in human cell lines causes cell cycle arrest at G2/M phase. This is THAP domain-containing protein 5 (THAP5) from Macaca fascicularis (Crab-eating macaque).